Here is a 416-residue protein sequence, read N- to C-terminus: Prostacyclin receptor (416 aa).

The Extracellular segment spans residues 1-45 (MVASGGRPDGPPSITPESPLIVGGREWQGMAGSCWNITYVQDSVG). 2 disulfide bridges follow: Cys-34–Cys-194 and Cys-121–Cys-199. Asn-36 carries N-linked (GlcNAc...) asparagine glycosylation. A helical transmembrane segment spans residues 46-67 (PATSTLMFVAGVVGNGLALGIL). Residues 68 to 80 (GARRRSHPSAFAV) are Cytoplasmic-facing. The helical transmembrane segment at 81-105 (LVTGLAVTDLLGTCFLSPAVFVAYA) threads the bilayer. The Extracellular segment spans residues 106 to 123 (RNSSLLGLAHGGTMLCDT). A helical transmembrane segment spans residues 124-144 (FAFAMTFFGLASTLILFAMAV). Over 145–163 (ERCLALSHPYLYAQLDGPR) the chain is Cytoplasmic. A helical transmembrane segment spans residues 164-187 (CARLALPAIYAFCCLFCSLPLLGL). Residues 188–215 (GEHQQYCPGSWCFIRMRSPQPGGCAFSL) are Extracellular-facing. A helical transmembrane segment spans residues 216–237 (AYASLMALLVTSIFFCNGSVTL). Residues 238–264 (SLCHMYRQQRRHHGSFVPTSRAREDEV) lie on the Cytoplasmic side of the membrane. The chain crosses the membrane as a helical span at residues 265 to 289 (YHLILLALMTGIMAVCSLPLTIRGF). At 290–302 (TQAIAPDSREMGD) the chain is on the extracellular side. The helical transmembrane segment at 303 to 323 (LHAFRFNAFNPILDPWVFILF) threads the bilayer. The Cytoplasmic segment spans residues 324–416 (RKAVFQRLKF…TEAVVACSLC (93 aa)). Ser-366 bears the Phosphoserine mark. Cys-413 is modified (cysteine methyl ester). The S-farnesyl cysteine moiety is linked to residue Cys-413. A propeptide spans 414 to 416 (SLC) (removed in mature form).

The protein belongs to the G-protein coupled receptor 1 family. As to quaternary structure, interacts (non-isoprenylated C-terminus) with PDZK1. Isoprenylation does not influence ligand binding but is required for efficient coupling to the effectors adenylyl cyclase and phospholipase C.

It is found in the cell membrane. Functionally, receptor for prostacyclin (prostaglandin I2 or PGI2). The activity of this receptor is mediated by G(s) proteins which activate adenylate cyclase. The polypeptide is Prostacyclin receptor (Ptgir) (Rattus norvegicus (Rat)).